A 496-amino-acid chain; its full sequence is Genome polyprotein (496 aa).

Topologically, residues 1-447 (SRCTHLENRD…HTVLGGAFNS (447 aa)) are extracellular. 6 cysteine pairs are disulfide-bonded: C3–C30, C60–C116, C60–C121, C74–C105, C92–C116, and C92–C121. The tract at residues 98-111 (DRGWGNHCGLFGKG) is fusion peptide. N154 carries an N-linked (GlcNAc...) asparagine; by host glycan. 2 disulfide bridges follow: C186/C290 and C307/C338. A helical transmembrane segment spans residues 448–468 (IFGGVGFLPKLLMGVALAWLG). Topologically, residues 469–479 (LNTRNPTMSMS) are cytoplasmic. The helical transmembrane segment at 480-496 (FLLAGGLVLAMTLGVGA) threads the bilayer.

In terms of assembly, homodimer; in the endoplasmic reticulum and Golgi. Post-translationally, N-glycosylated.

It is found in the virion membrane. It localises to the host endoplasmic reticulum membrane. Its function is as follows. Binds to host cell surface receptor and mediates fusion between viral and cellular membranes. Envelope protein is synthesized in the endoplasmic reticulum in the form of heterodimer with protein prM. They play a role in virion budding in the ER, and the newly formed immature particle is covered with 60 spikes composed of heterodimer between precursor prM and envelope protein E. The virion is transported to the Golgi apparatus where the low pH causes dissociation of PrM-E heterodimers and formation of E homodimers. prM-E cleavage is ineficient, and many virions are only partially matured. These uncleaved prM would play a role in immune evasion. In Louping ill virus (strain Negishi 3248/49/P10) (Li), this protein is Genome polyprotein.